A 944-amino-acid chain; its full sequence is Isoleucine--tRNA ligase (944 aa).

Positions 58–68 (PYANGQIHIGH) match the 'HIGH' region motif. Glu568 provides a ligand contact to L-isoleucyl-5'-AMP. Residues 609 to 613 (KMSKS) carry the 'KMSKS' region motif. Lys612 contributes to the ATP binding site. Cys907, Cys910, Cys927, and Cys930 together coordinate Zn(2+).

It belongs to the class-I aminoacyl-tRNA synthetase family. IleS type 1 subfamily. In terms of assembly, monomer. The cofactor is Zn(2+).

It localises to the cytoplasm. It catalyses the reaction tRNA(Ile) + L-isoleucine + ATP = L-isoleucyl-tRNA(Ile) + AMP + diphosphate. In terms of biological role, catalyzes the attachment of isoleucine to tRNA(Ile). As IleRS can inadvertently accommodate and process structurally similar amino acids such as valine, to avoid such errors it has two additional distinct tRNA(Ile)-dependent editing activities. One activity is designated as 'pretransfer' editing and involves the hydrolysis of activated Val-AMP. The other activity is designated 'posttransfer' editing and involves deacylation of mischarged Val-tRNA(Ile). The chain is Isoleucine--tRNA ligase from Idiomarina loihiensis (strain ATCC BAA-735 / DSM 15497 / L2-TR).